The sequence spans 330 residues: Alpha-1,6-glucosyltransferase (330 aa).

It belongs to the glycosyltransferase group 1 family. The cofactor is Does not require a metal cofactor..

It localises to the cytoplasm. Its pathway is protein modification; protein glycosylation. Functionally, catalyzes the transfer of a glucose moiety from UDP-glucose to another glucose that is N-linked to an asparagine within a peptide or protein. Can act in a repetitive manner, and this way it elongates the N-linked glucose by a glycan chain consisting of several alpha-1-&gt;6 linked glucose residues. Is able to add up to six glucose units in vitro. Cannot use UDP-Gal, UDP-GlcNAc or UDP-GalNAc as a substrate donor. The polypeptide is Alpha-1,6-glucosyltransferase (Actinobacillus pleuropneumoniae serotype 7 (strain AP76)).